The sequence spans 521 residues: MKKLRCDQTPAWAALNTHFNASGRHFDVREAFARDARRFEAFSQDAPHVFADLSKNLIDADSQALLLALARQCGLEQQRDAMFAGELINSTEQRAVMHFLLRNPPSAQYTPAQAAINKIADAQAEVEVTLNAMLAYAEQVRADAAITDIVNIGIGGSDLGPQMAVLALNEFATAGKRLHFVSNIDGDELAGVLGLVKPENTLFLVASKTFTTTETMTNARSAKAWFEARGGQDIARHFAALTTNVAAANEFGITTTFGFWDWVGGRYSLWSAIGLPLAIAIGAAGFREFLAGAHAMDEHFRTAALEDNLPVRLGLLDVWYRNFHGFSSRSIAPYSSALRRWPAYLQQLEMESNGKRVDKDGQPLPFDTSPVLWGEPGTNGQHAYFQMLHQGTAVVPVEFVAVKRAAHGLPGHHDKLLANVLAQAQALMRGKKDAGGHQDFPGNRPSTFLLLEQLTPASLGALIALQEHRVFVSGAIWGINSFDQWGVELGKVLARDIEPRLQSGDISGLDGSTAGLLQRLR.

E351 functions as the Proton donor in the catalytic mechanism. Catalysis depends on residues H382 and K491.

Belongs to the GPI family.

The protein localises to the cytoplasm. The enzyme catalyses alpha-D-glucose 6-phosphate = beta-D-fructose 6-phosphate. It functions in the pathway carbohydrate biosynthesis; gluconeogenesis. It participates in carbohydrate degradation; glycolysis; D-glyceraldehyde 3-phosphate and glycerone phosphate from D-glucose: step 2/4. Its function is as follows. Catalyzes the reversible isomerization of glucose-6-phosphate to fructose-6-phosphate. The sequence is that of Glucose-6-phosphate isomerase from Polaromonas naphthalenivorans (strain CJ2).